The sequence spans 175 residues: ATP-dependent protease subunit HslV (175 aa).

Threonine 2 is a catalytic residue. Positions 159, 162, and 165 each coordinate Na(+).

The protein belongs to the peptidase T1B family. HslV subfamily. In terms of assembly, a double ring-shaped homohexamer of HslV is capped on each side by a ring-shaped HslU homohexamer. The assembly of the HslU/HslV complex is dependent on binding of ATP.

It localises to the cytoplasm. The catalysed reaction is ATP-dependent cleavage of peptide bonds with broad specificity.. Allosterically activated by HslU binding. In terms of biological role, protease subunit of a proteasome-like degradation complex believed to be a general protein degrading machinery. The protein is ATP-dependent protease subunit HslV of Ligilactobacillus salivarius (strain UCC118) (Lactobacillus salivarius).